Reading from the N-terminus, the 316-residue chain is tRNA dimethylallyltransferase (316 aa).

Position 13 to 20 (Gly-13 to Thr-20) interacts with ATP. Thr-15–Thr-20 is a substrate binding site. Interaction with substrate tRNA regions lie at residues Asp-38–Leu-41, Gln-162–Arg-166, Arg-243–Arg-248, and Lys-276–Arg-283.

It belongs to the IPP transferase family. In terms of assembly, monomer. Requires Mg(2+) as cofactor.

It catalyses the reaction adenosine(37) in tRNA + dimethylallyl diphosphate = N(6)-dimethylallyladenosine(37) in tRNA + diphosphate. Functionally, catalyzes the transfer of a dimethylallyl group onto the adenine at position 37 in tRNAs that read codons beginning with uridine, leading to the formation of N6-(dimethylallyl)adenosine (i(6)A). The chain is tRNA dimethylallyltransferase from Pasteurella multocida (strain Pm70).